Consider the following 204-residue polypeptide: Large ribosomal subunit protein uL13 (204 aa).

It belongs to the universal ribosomal protein uL13 family.

This is Large ribosomal subunit protein uL13 (RpL13A) from Spodoptera frugiperda (Fall armyworm).